The primary structure comprises 960 residues: CWF19-like protein 2 (960 aa).

4 disordered regions span residues 1–222, 261–552, 624–648, and 712–731; these read MAAY…AGVV, EFQK…ELIL, AWPV…AIET, and AQKE…AVQE. A coiled-coil region spans residues 13–101; it reads SIKSRKESKR…KKAKKEKKDE (89 aa). The span at 16–52 shows a compositional bias: basic and acidic residues; the sequence is SRKESKREERERVIQKAKEKFEKEERRKAERKARGED. The segment covering 73-96 has biased composition (basic residues); that stretch reads KTKKAKKEKKAKKSKKEKKKKAKK. The span at 108 to 117 shows a compositional bias: acidic residues; sequence SSEDSEDEWV. A compositionally biased stretch (low complexity) spans 135–146; sequence EATPSSSSASNN. Residues 163-279 are a coiled coil; it reads SVADRRAQKE…EDAAYGERRD (117 aa). Composition is skewed to basic and acidic residues over residues 165-181, 261-372, and 404-417; these read ADRR…ERQK, EFQK…DDLS, and KPVD…EAGF. Positions 507–518 are enriched in polar residues; it reads SAVQDSETPTLQ. A coiled-coil region spans residues 540-605; it reads SESEEEEEEE…IKDQSKRASK (66 aa). The segment covering 541–552 has biased composition (acidic residues); sequence ESEEEEEEELIL. Over residues 713–731 the composition is skewed to basic and acidic residues; the sequence is QKERAGRDEERQRNKAVQE.

The protein belongs to the CWF19 family.

This is CWF19-like protein 2 (cwf19l2) from Danio rerio (Zebrafish).